An 89-amino-acid chain; its full sequence is MAHKKGTGSTRNGRDSRSQRLGVKRYGGQVVKAGNILIRQRGTKVHPGKNVGRGGDDTLFALIDGVVKFEYKDKSRRQVSVYPAEVSAS.

Positions 1-24 (MAHKKGTGSTRNGRDSRSQRLGVK) are disordered.

The protein belongs to the bacterial ribosomal protein bL27 family.

The protein is Large ribosomal subunit protein bL27 of Microcystis aeruginosa (strain NIES-843 / IAM M-2473).